A 252-amino-acid chain; its full sequence is Imidazole glycerol phosphate synthase subunit HisF (252 aa).

Catalysis depends on residues aspartate 11 and aspartate 130.

Belongs to the HisA/HisF family. As to quaternary structure, heterodimer of HisH and HisF.

It localises to the cytoplasm. The enzyme catalyses 5-[(5-phospho-1-deoxy-D-ribulos-1-ylimino)methylamino]-1-(5-phospho-beta-D-ribosyl)imidazole-4-carboxamide + L-glutamine = D-erythro-1-(imidazol-4-yl)glycerol 3-phosphate + 5-amino-1-(5-phospho-beta-D-ribosyl)imidazole-4-carboxamide + L-glutamate + H(+). It participates in amino-acid biosynthesis; L-histidine biosynthesis; L-histidine from 5-phospho-alpha-D-ribose 1-diphosphate: step 5/9. IGPS catalyzes the conversion of PRFAR and glutamine to IGP, AICAR and glutamate. The HisF subunit catalyzes the cyclization activity that produces IGP and AICAR from PRFAR using the ammonia provided by the HisH subunit. The chain is Imidazole glycerol phosphate synthase subunit HisF from Pelotomaculum thermopropionicum (strain DSM 13744 / JCM 10971 / SI).